Reading from the N-terminus, the 603-residue chain is Probable lysosomal cobalamin transporter (603 aa).

9 helical membrane passes run 13 to 33 (IWVAYAVAVALVFFVAVITVF), 50 to 70 (IVSLTALLATVFLLPVDIALV), 99 to 119 (IVYYSLYSFDALLCLVVIPFA), 150 to 170 (IAFIILVIILFLVGFFVPTAA), 201 to 221 (LLMTLGVLLYVLYTATGLALL), 318 to 338 (LFGGILLLCLSVILWISMLIT), 353 to 373 (GYILGHINVFQPVNWVFVKAA), 381 to 401 (ILMAFLILFLFSSSITGIASV), and 422 to 442 (ALLIATVMQALIILAINYAVV). Asn-509 is a glycosylation site (N-linked (GlcNAc...) asparagine). Residues 512–532 (VFGAIDFWAQFAFLTVFLLVF) traverse the membrane as a helical segment. Asn-543 carries N-linked (GlcNAc...) asparagine glycosylation. Residues 578–603 (AKRTVGGHPNGQGYGTSGTNGTASSR) are disordered. Positions 585–595 (HPNGQGYGTSG) are enriched in gly residues. Residue Asn-597 is glycosylated (N-linked (GlcNAc...) asparagine).

The protein belongs to the LIMR family. LMBRD1 subfamily.

It is found in the lysosome membrane. Probable lysosomal cobalamin transporter. Required to export cobalamin from lysosomes allowing its conversion to cofactors. The sequence is that of Probable lysosomal cobalamin transporter from Neurospora crassa (strain ATCC 24698 / 74-OR23-1A / CBS 708.71 / DSM 1257 / FGSC 987).